We begin with the raw amino-acid sequence, 569 residues long: Serine/threonine-protein kinase gad8 (569 aa).

A disordered region spans residues 19–63 (GLNSGGSSFTRGLKNSTLSSTSSRKSSDEKSRKSSEDKRSPQSTV). The span at 31 to 42 (LKNSTLSSTSSR) shows a compositional bias: low complexity. A compositionally biased stretch (basic and acidic residues) spans 43–58 (KSSDEKSRKSSEDKRS). In terms of domain architecture, C2 spans 45–202 (SDEKSRKSSE…IVNKLTDEWV (158 aa)). The region spanning 230-485 (FELLKVVGKG…AQEIKNHPFF (256 aa)) is the Protein kinase domain. ATP-binding positions include 236–244 (VGKGSFGKV) and Lys-259. Asp-353 serves as the catalytic Proton acceptor. Thr-387 carries the post-translational modification Phosphothreonine; by ksg1. Residues 486–557 (DDIDWKKLCA…QRPTTIDTSD (72 aa)) form the AGC-kinase C-terminal domain. Phosphoserine; by TORC2 occurs at positions 527 and 546.

It belongs to the protein kinase superfamily. AGC Ser/Thr protein kinase family. In terms of processing, phosphorylated by ksg1 and target of rapamycin complex 2 (TORC2), affecting the kinase activity of gad8 in a nutrient-dependent manner.

The enzyme catalyses L-seryl-[protein] + ATP = O-phospho-L-seryl-[protein] + ADP + H(+). It catalyses the reaction L-threonyl-[protein] + ATP = O-phospho-L-threonyl-[protein] + ADP + H(+). Functionally, involved in a signaling module for sexual development and cell growth under stressed conditions. Required for G1 arrest under nitrogen starvation and for growth at high temperature and osmolarity. This Schizosaccharomyces pombe (strain 972 / ATCC 24843) (Fission yeast) protein is Serine/threonine-protein kinase gad8.